Reading from the N-terminus, the 263-residue chain is Trem-like transcript 4 protein (263 aa).

Positions 1 to 28 (MAWRYSQLLLVPVQLVFLASVCCPGVWG) are cleaved as a signal peptide. An Ig-like V-type domain is found at 29 to 132 (STVSEELHRM…LREVTVLRNI (104 aa)). The Extracellular segment spans residues 29–200 (STVSEELHRM…GWTSPGLLVS (172 aa)). Residues Cys-47 and Cys-116 are joined by a disulfide bond. An N-linked (GlcNAc...) asparagine glycan is attached at Asn-100. Residues 168 to 191 (SPEETTDSSINGTGHRNQSSSSPG) are disordered. Residues 201 to 221 (VQYGLLLLKALMLSVFCVLLC) traverse the membrane as a helical segment. Residues 222-263 (WRSGQGREYMAETMELSKLPHISKSLDTVSHISGYEKKANWY) lie on the Cytoplasmic side of the membrane.

Interacts with TYROBP/DAP12. In terms of tissue distribution, predominantly expressed in spleen, with highest levels on selected populations of macrophages, including red pulp macrophages, and on subsets of dendritic cells (DC), mostly on CD8alpha(+) DC (at protein level). Also expressed on blood and spleen Ly6C(low) monocytes (at protein level). Not expressed on lymphocytes or granulocytes (at protein level).

Its subcellular location is the cell membrane. Its function is as follows. Positively regulates Toll-like receptor signaling via TLR7, TLR9 and TLR13 in neutrophils and splenic macrophages. Regulates TLR7 signaling by controlling ligand-induced recruitment of TLR7 from the endoplasmic reticulum to endosomes and lysosomes. Positively regulates Toll-like receptor TLR9-induced production of inflammatory cytokines but is dispensable for IFNB1 production. Involved in the anti-viral response to several viruses including influenza virus, vesicular stomatitis virus and cytomegalovirus. Binds to late apoptotic, and necrotic cells, but not living or early apoptotic cells, but is not essential for uptake of dying cells by dendritic cells (DCs). Does not bind nucleic acids. May participate in antigen presentation. In Mus musculus (Mouse), this protein is Trem-like transcript 4 protein (Treml4).